The primary structure comprises 280 residues: 2-dehydro-3-deoxyphosphooctonate aldolase (280 aa).

Belongs to the KdsA family.

The protein resides in the cytoplasm. The catalysed reaction is D-arabinose 5-phosphate + phosphoenolpyruvate + H2O = 3-deoxy-alpha-D-manno-2-octulosonate-8-phosphate + phosphate. The protein operates within carbohydrate biosynthesis; 3-deoxy-D-manno-octulosonate biosynthesis; 3-deoxy-D-manno-octulosonate from D-ribulose 5-phosphate: step 2/3. It participates in bacterial outer membrane biogenesis; lipopolysaccharide biosynthesis. The polypeptide is 2-dehydro-3-deoxyphosphooctonate aldolase (Thioalkalivibrio sulfidiphilus (strain HL-EbGR7)).